Reading from the N-terminus, the 129-residue chain is Biogenesis of lysosome-related organelles complex 1 subunit CNL1 (129 aa).

This sequence belongs to the BLOC1S4 family. As to quaternary structure, component of the biogenesis of lysosome-related organelles complex-1 (BLOC-1).

It localises to the cytoplasm. Component of the biogenesis of lysosome-related organelles complex-1 (BLOC-1), a complex that is involved in endosomal cargo sorting. The protein is Biogenesis of lysosome-related organelles complex 1 subunit CNL1 (CLN1) of Eremothecium gossypii (strain ATCC 10895 / CBS 109.51 / FGSC 9923 / NRRL Y-1056) (Yeast).